The following is a 386-amino-acid chain: Patatin-07 (386 aa).

The first 23 residues, 1-23 (MATTKSFLILFFMILATTSSTCA), serve as a signal peptide directing secretion. The PNPLA domain maps to 32-229 (LSIDGGGIKG…TVADPALLSV (198 aa)). Residues 36-41 (GGGIKG) carry the GXGXXG motif. Positions 75 to 79 (GTSTG) match the GXSXG motif. Ser77 (nucleophile) is an active-site residue. 2 N-linked (GlcNAc...) asparagine glycosylation sites follow: Asn115 and Asn202. Asp215 acts as the Proton acceptor in catalysis. The DGA/G motif lies at 215 to 217 (DGA).

It belongs to the patatin family. In terms of tissue distribution, tuber.

It localises to the vacuole. Its function is as follows. Probable lipolytic acyl hydrolase (LAH), an activity which is thought to be involved in the response of tubers to pathogens. This chain is Patatin-07, found in Solanum tuberosum (Potato).